The primary structure comprises 239 residues: Succinate dehydrogenase [ubiquinone] iron-sulfur subunit (239 aa).

A 2Fe-2S ferredoxin-type domain is found at phenylalanine 11–methionine 100. [2Fe-2S] cluster contacts are provided by cysteine 61, cysteine 66, cysteine 69, and cysteine 81. In terms of domain architecture, 4Fe-4S ferredoxin-type spans aspartate 141–tyrosine 171. The [4Fe-4S] cluster site is built by cysteine 151, cysteine 154, and cysteine 157. Cysteine 161 serves as a coordination point for [3Fe-4S] cluster. An a ubiquinone-binding site is contributed by tryptophan 166. [3Fe-4S] cluster contacts are provided by cysteine 208 and cysteine 214. [4Fe-4S] cluster is bound at residue cysteine 218.

The protein belongs to the succinate dehydrogenase/fumarate reductase iron-sulfur protein family. Component of complex II composed of four subunits: a flavoprotein (FP), an iron-sulfur protein (IP), and a cytochrome b composed of a large and a small subunit. [2Fe-2S] cluster serves as cofactor. It depends on [3Fe-4S] cluster as a cofactor. The cofactor is [4Fe-4S] cluster.

Its subcellular location is the mitochondrion inner membrane. It carries out the reaction a quinone + succinate = fumarate + a quinol. The protein operates within carbohydrate metabolism; tricarboxylic acid cycle; fumarate from succinate (eukaryal route): step 1/1. Its function is as follows. Iron-sulfur protein (IP) subunit of succinate dehydrogenase (SDH) that is involved in complex II of the mitochondrial electron transport chain and is responsible for transferring electrons from succinate to ubiquinone (coenzyme Q). This Reclinomonas americana protein is Succinate dehydrogenase [ubiquinone] iron-sulfur subunit (SDH2).